The primary structure comprises 703 residues: Probable boron transporter 2 (703 aa).

Over 1–35 (MEETFVPFEGIKNDLKGRLMCYKQDWTGGIKAGFR) the chain is Cytoplasmic. Residues 36 to 56 (ILAPTTYIFFASAIPVISFGE) form a helical membrane-spanning segment. Over 57–75 (QLERSTDGVLTAVQTLAST) the chain is Extracellular. The chain crosses the membrane as a helical span at residues 76–96 (AICGIIHSIIGGQPLLILGVA). Topologically, residues 97–120 (EPTVIMYTFMFNFAKGRPELGRNL) are cytoplasmic. A helical membrane pass occupies residues 121–141 (FLAWSGWVCVWTSLILFVLAI). The Extracellular portion of the chain corresponds to 142–155 (CGACSFINRFTRVA). The helical transmembrane segment at 156–176 (GELFGLLIAMLFMQQAIKGLV) threads the bilayer. Residues 177 to 195 (DEFRAPAREDLKLVEFLPS) are Cytoplasmic-facing. The helical transmembrane segment at 196-216 (WRFANGMFALVLSFGLLITAL) threads the bilayer. Residues 217-233 (RSRKARSWRYGTGWLRS) lie on the Extracellular side of the membrane. The helical transmembrane segment at 234–254 (LVADYGVPLMVLVWTGVSYIP) threads the bilayer. Residues 255 to 289 (TGDVPKGIPRRLFSPNPWSPGAYENWTVVKEMLQV) lie on the Cytoplasmic side of the membrane. A helical transmembrane segment spans residues 290–310 (PIVYIIGAFIPATMIAVLYYF). Topologically, residues 311 to 337 (DHSVASQLAQQKEFNLRKPSSYHYDLL) are extracellular. Residues 338–358 (LLGFLTLMCGLLGIPPSNGVI) form a helical membrane-spanning segment. At 359 to 480 (PQSPMHTKSL…AVMVGGCVAA (122 aa)) the chain is on the cytoplasmic side. Residues 481–501 (MPLLKMIPTSVLWGYFAFMAI) form a helical membrane-spanning segment. Over 502 to 557 (ESLPGNQFWERILLLFTAPSRRFKVLEDNHATFVETVPFKTIAMFTIFQTTYLLTC) the chain is Extracellular. The chain crosses the membrane as a helical span at residues 558–578 (FGLTWIPIAGVMFPLLIMFLI). Over 579 to 703 (PVRQYILPRF…SPLNPSSSSK (125 aa)) the chain is Cytoplasmic. The segment at 678 to 703 (EMSPRLSGKGQNSPKPSPLNPSSSSK) is disordered.

This sequence belongs to the anion exchanger (TC 2.A.31.3) family.

Its subcellular location is the membrane. Probable boron transporter. Boron is essential for maintaining the integrity of plants cell walls. The chain is Probable boron transporter 2 (BOR2) from Arabidopsis thaliana (Mouse-ear cress).